The sequence spans 276 residues: Diaminopimelate epimerase (276 aa).

Asn-13, Gln-46, and Asn-66 together coordinate substrate. Residue Cys-75 is the Proton donor of the active site. Residues Gly-76–Asn-77, Asn-159, Asn-192, and Glu-210–Arg-211 each bind substrate. Catalysis depends on Cys-219, which acts as the Proton acceptor. Gly-220–Ser-221 is a substrate binding site.

The protein belongs to the diaminopimelate epimerase family. In terms of assembly, homodimer.

It is found in the cytoplasm. It carries out the reaction (2S,6S)-2,6-diaminopimelate = meso-2,6-diaminopimelate. Its pathway is amino-acid biosynthesis; L-lysine biosynthesis via DAP pathway; DL-2,6-diaminopimelate from LL-2,6-diaminopimelate: step 1/1. Functionally, catalyzes the stereoinversion of LL-2,6-diaminopimelate (L,L-DAP) to meso-diaminopimelate (meso-DAP), a precursor of L-lysine and an essential component of the bacterial peptidoglycan. The sequence is that of Diaminopimelate epimerase from Pseudoalteromonas atlantica (strain T6c / ATCC BAA-1087).